A 446-amino-acid chain; its full sequence is Putative ankyrin repeat protein L273 (446 aa).

ANK repeat units lie at residues 71–100 (NGEF…KSNM), 124–153 (DHNK…RMRP), 206–237 (TDIE…KILM), 245–277 (VWVS…KMHV), 303–332 (ELEY…NSYY), and 365–394 (YTDI…QQII).

This chain is Putative ankyrin repeat protein L273, found in Acanthamoeba polyphaga (Amoeba).